The following is a 150-amino-acid chain: Arginine repressor (150 aa).

This sequence belongs to the ArgR family.

The protein localises to the cytoplasm. Its pathway is amino-acid biosynthesis; L-arginine biosynthesis [regulation]. Its function is as follows. Regulates arginine biosynthesis genes. The chain is Arginine repressor from Staphylococcus saprophyticus subsp. saprophyticus (strain ATCC 15305 / DSM 20229 / NCIMB 8711 / NCTC 7292 / S-41).